The sequence spans 234 residues: Sugar fermentation stimulation protein A (234 aa).

A DNA-binding region (H-T-H motif) is located at residues leucine 201–serine 220.

It belongs to the SfsA family.

In terms of biological role, binds to DNA non-specifically. Could be a regulatory factor involved in maltose metabolism. In Shigella flexneri serotype 5b (strain 8401), this protein is Sugar fermentation stimulation protein A.